The sequence spans 90 residues: uncharacterized protein (90 aa).

This is an uncharacterized protein from Bos taurus (Bovine).